Here is a 399-residue protein sequence, read N- to C-terminus: Flavohemoprotein (399 aa).

In terms of domain architecture, Globin spans 1–138 (MLDNKTIEII…IADAFIGIEK (138 aa)). Histidine 85 lines the heme b pocket. Residues tyrosine 95 and glutamate 137 each act as charge relay system in the active site. The tract at residues 149–399 (GGWKEYKPFV…GPQLSLAQSV (251 aa)) is reductase. An FAD-binding FR-type domain is found at 152–255 (KEYKPFVIAK…SAPAGDFVLD (104 aa)). FAD-binding positions include tyrosine 190 and 206-209 (RQYS). 268–273 (GVGITP) serves as a coordination point for NADP(+). Position 388 to 391 (388 to 391 (LFGP)) interacts with FAD.

Belongs to the globin family. Two-domain flavohemoproteins subfamily. This sequence in the C-terminal section; belongs to the flavoprotein pyridine nucleotide cytochrome reductase family. Heme b serves as cofactor. It depends on FAD as a cofactor.

It carries out the reaction 2 nitric oxide + NADPH + 2 O2 = 2 nitrate + NADP(+) + H(+). The catalysed reaction is 2 nitric oxide + NADH + 2 O2 = 2 nitrate + NAD(+) + H(+). Functionally, is involved in NO detoxification in an aerobic process, termed nitric oxide dioxygenase (NOD) reaction that utilizes O(2) and NAD(P)H to convert NO to nitrate, which protects the bacterium from various noxious nitrogen compounds. Therefore, plays a central role in the inducible response to nitrosative stress. This Bacillus subtilis (strain 168) protein is Flavohemoprotein (hmp).